The sequence spans 236 residues: Purine nucleoside phosphorylase DeoD-type (236 aa).

Residue His-5 coordinates a purine D-ribonucleoside. Phosphate-binding positions include Gly-21, Arg-25, Arg-44, and 88–91; that span reads RVGS. Residues 180-182 and 204-205 contribute to the a purine D-ribonucleoside site; these read EME and SD. Asp-205 functions as the Proton donor in the catalytic mechanism.

This sequence belongs to the PNP/UDP phosphorylase family. In terms of assembly, homohexamer; trimer of homodimers.

It carries out the reaction a purine D-ribonucleoside + phosphate = a purine nucleobase + alpha-D-ribose 1-phosphate. The catalysed reaction is a purine 2'-deoxy-D-ribonucleoside + phosphate = a purine nucleobase + 2-deoxy-alpha-D-ribose 1-phosphate. Catalyzes the reversible phosphorolytic breakdown of the N-glycosidic bond in the beta-(deoxy)ribonucleoside molecules, with the formation of the corresponding free purine bases and pentose-1-phosphate. The chain is Purine nucleoside phosphorylase DeoD-type from Psychromonas ingrahamii (strain DSM 17664 / CCUG 51855 / 37).